We begin with the raw amino-acid sequence, 100 residues long: Cobalt transport protein CbiN (100 aa).

Transmembrane regions (helical) follow at residues 8-28 (LSNW…LIFV) and 69-89 (LLFS…VGLY).

Belongs to the CbiN family. As to quaternary structure, forms an energy-coupling factor (ECF) transporter complex composed of an ATP-binding protein (A component, CbiO), a transmembrane protein (T component, CbiQ) and 2 possible substrate-capture proteins (S components, CbiM and CbiN) of unknown stoichimetry.

It is found in the cell inner membrane. The protein operates within cofactor biosynthesis; adenosylcobalamin biosynthesis. In terms of biological role, part of the energy-coupling factor (ECF) transporter complex CbiMNOQ involved in cobalt import. This chain is Cobalt transport protein CbiN, found in Nostoc sp. (strain PCC 7120 / SAG 25.82 / UTEX 2576).